The primary structure comprises 44 residues: MQSVITDVTGQLTAVQADITTIGGAIIVLAAVVLGIRWIKAQFF.

Residues 1–18 (MQSVITDVTGQLTAVQAD) lie on the Periplasmic side of the membrane. Residues 19–39 (ITTIGGAIIVLAAVVLGIRWI) form a helical membrane-spanning segment. The Cytoplasmic portion of the chain corresponds to 40–44 (KAQFF).

The protein belongs to the inovirus capsid protein family. Homomultimerizes. There are several thousand copies of this protein in the phage capsid.

The protein resides in the virion. Its subcellular location is the host cell inner membrane. Functionally, self assembles to form a helical capsid wrapping up the viral genomic DNA. The capsid displays a filamentous structure with a length of 760-1950 nm and a width of 6-8 nm. The virion assembly and budding take place at the host inner membrane. This chain is Capsid protein G8P (VIII), found in Pseudomonas aeruginosa (Bacteriophage Pf3).